We begin with the raw amino-acid sequence, 577 residues long: External alternative NAD(P)H-ubiquinone oxidoreductase B1, mitochondrial (577 aa).

Residues 1–35 constitute a mitochondrion transit peptide; the sequence is MRGFTYLSKVLHSHSSYSKLLVLCSVSTGGLLVYA. An FAD-binding site is contributed by 57 to 87; that stretch reads RVVVLGTGWGGTSFLKDVDISSYDVQVVSPR. 221–257 serves as a coordination point for NAD(+); that stretch reads LHFVIVGGGPTGVEFAAELHDYVYEDLVKIYPSVKDF. An EF-hand domain is found at 378 to 413; the sequence is KVMEDISAIFKAADKDDSGTLSIEEFRDVLEDIIIR. Ca(2+)-binding residues include aspartate 391, aspartate 393, serine 395, threonine 397, and glutamate 402. A Microbody targeting signal motif is present at residues 568-577; the sequence is YIFGRDSSRI.

Belongs to the NADH dehydrogenase family. The cofactor is FAD.

It localises to the mitochondrion inner membrane. Its subcellular location is the peroxisome. It carries out the reaction a quinone + NADH + H(+) = a quinol + NAD(+). It catalyses the reaction a ubiquinone + NADH + H(+) = a ubiquinol + NAD(+). Activity is calcium-dependent with a more pronounced effect at higher pH. Functionally, alternative NADH-ubiquinone oxidoreductase which catalyzes the oxidation of mitochondrial NADH does not translocate protons across the inner mitochondrial membrane. Calcium-dependent NAD(P)H dehydrogenase. Binds calcium ions. In Solanum tuberosum (Potato), this protein is External alternative NAD(P)H-ubiquinone oxidoreductase B1, mitochondrial (NDB1).